We begin with the raw amino-acid sequence, 250 residues long: Proteasome subunit alpha (250 aa).

The protein belongs to the peptidase T1A family. In terms of assembly, the 20S proteasome core is composed of 14 alpha and 14 beta subunits that assemble into four stacked heptameric rings, resulting in a barrel-shaped structure. The two inner rings, each composed of seven catalytic beta subunits, are sandwiched by two outer rings, each composed of seven alpha subunits. The catalytic chamber with the active sites is on the inside of the barrel. Has a gated structure, the ends of the cylinder being occluded by the N-termini of the alpha-subunits. Is capped by the proteasome-associated ATPase, ARC.

Its subcellular location is the cytoplasm. It functions in the pathway protein degradation; proteasomal Pup-dependent pathway. With respect to regulation, the formation of the proteasomal ATPase ARC-20S proteasome complex, likely via the docking of the C-termini of ARC into the intersubunit pockets in the alpha-rings, may trigger opening of the gate for substrate entry. Interconversion between the open-gate and close-gate conformations leads to a dynamic regulation of the 20S proteasome proteolysis activity. Functionally, component of the proteasome core, a large protease complex with broad specificity involved in protein degradation. The protein is Proteasome subunit alpha of Mycobacterium sp. (strain JLS).